The following is an 898-amino-acid chain: Transportin-1 (898 aa).

The residue at position 1 (methionine 1) is an N-acetylmethionine. 20 HEAT repeats span residues 19-46, 51-89, 98-131, 137-174, 181-211, 224-251, 263-290, 306-397, 405-433, 445-472, 486-519, 527-560, 568-606, 614-665, 676-707, 715-748, 756-791, 799-832, 841-872, and 875-895; these read GLQQ…QKLE, YPDF…AHFQ, FIKS…KGEL, LLPK…LDSD, NIMI…QFII, FIEN…VMLL, HNIV…FWLT, PKLI…LANV, HILP…GAIA, PELI…TLSR, LKPL…EEEA, LAYI…ADSV, EYIQ…TALQ, EPVY…GLGG, ILTL…KACF, ADFM…IQMG, PMVL…YVCP, QQFI…ISVN, IFFC…KNQV, and ENWR…LAAF. Positions 41-109 constitute an Importin N-terminal domain; it reads VQQKLEQLNQ…KSECLNNIGD (69 aa). Residues 347–374 are disordered; it reads FHRSRTVAQQHDEDGIEEEDDDDDEIDD. The segment covering 360–374 has biased composition (acidic residues); that stretch reads DGIEEEDDDDDEIDD.

The protein belongs to the importin beta family. Importin beta-2 subfamily. Identified in a complex that contains TNPO1, RAN and RANBP1. Binds HNRPA1, HNRPA2, HNRNPDL, RPS7, RPL5 and RAN. Interacts with H2A, H2B, H3 and H4 histones. Interacts with isoform 1 and isoform 5 of ADAR/ADAR1 (via DRBM 3 domain). Interacts with SNAI1 (via zinc fingers); the interaction mediates SNAI1 nuclear import. Interacts with SNAI2 (via zinc fingers). Interacts with RPL23A (via BIB domain) and SRP19; this interaction is involved in RPL23A and SRP19 import into the nucleus. Interacts (via HEAT repeats 8-12) with BAP1 (via non-classical PY-NLS); this interaction is direct, is involved in BAP1 nuclear import and disrupts BAP1 homodimerization. In terms of assembly, (Microbial infection) Binds to HIV-1 Rev.

It is found in the cytoplasm. The protein resides in the nucleus. Functions in nuclear protein import as nuclear transport receptor. Serves as receptor for nuclear localization signals (NLS) in cargo substrates. May mediate docking of the importin/substrate complex to the nuclear pore complex (NPC) through binding to nucleoporin and the complex is subsequently translocated through the pore by an energy requiring, Ran-dependent mechanism. At the nucleoplasmic side of the NPC, Ran binds to the importin, the importin/substrate complex dissociates and importin is re-exported from the nucleus to the cytoplasm where GTP hydrolysis releases Ran. The directionality of nuclear import is thought to be conferred by an asymmetric distribution of the GTP- and GDP-bound forms of Ran between the cytoplasm and nucleus. Involved in nuclear import of M9-containing proteins. In vitro, binds directly to the M9 region of the heterogeneous nuclear ribonucleoproteins (hnRNP), A1 and A2 and mediates their nuclear import. Involved in hnRNP A1/A2 nuclear export. Mediates the nuclear import of ribosomal proteins RPL23A, RPS7 and RPL5. In vitro, mediates nuclear import of H2A, H2B, H3 and H4 histones. In vitro, mediates nuclear import of SRP19. Mediates nuclear import of ADAR/ADAR1 isoform 1 and isoform 5 in a RanGTP-dependent manner. Main mediator of PR-DUB complex component BAP1 nuclear import; acts redundantly with the karyopherins KPNA1 and KPNA2. In terms of biological role, (Microbial infection) In case of HIV-1 infection, binds and mediates the nuclear import of HIV-1 Rev. This chain is Transportin-1 (TNPO1), found in Homo sapiens (Human).